Consider the following 60-residue polypeptide: Cytotoxin 6 (60 aa).

4 cysteine pairs are disulfide-bonded: C3–C21, C14–C38, C42–C53, and C54–C59.

Belongs to the three-finger toxin family. Short-chain subfamily. Type IA cytotoxin sub-subfamily. Monomer in solution; Homodimer and oligomer in the presence of negatively charged lipids forming a pore with a size ranging between 20 and 30 Angstroms. In terms of tissue distribution, expressed by the venom gland.

Its subcellular location is the secreted. The protein localises to the target cell membrane. Shows cytolytic activity on many different cells by forming pore in lipid membranes. In vivo, increases heart rate or kills the animal by cardiac arrest. In addition, it binds to heparin with high affinity, interacts with Kv channel-interacting protein 1 (KCNIP1) in a calcium-independent manner, and binds to integrin alpha-V/beta-3 (ITGAV/ITGB3) with moderate affinity. In Naja annulifera (Banded Egyptian cobra), this protein is Cytotoxin 6.